We begin with the raw amino-acid sequence, 437 residues long: Enolase 2 (437 aa).

Glutamine 162 contributes to the (2R)-2-phosphoglycerate binding site. The active-site Proton donor is the glutamate 204. Positions 251, 297, and 324 each coordinate Mg(2+). (2R)-2-phosphoglycerate contacts are provided by lysine 349, arginine 378, serine 379, and lysine 400. Lysine 349 serves as the catalytic Proton acceptor.

It belongs to the enolase family. Requires Mg(2+) as cofactor.

Its subcellular location is the cytoplasm. The protein resides in the secreted. The protein localises to the cell surface. It carries out the reaction (2R)-2-phosphoglycerate = phosphoenolpyruvate + H2O. It functions in the pathway carbohydrate degradation; glycolysis; pyruvate from D-glyceraldehyde 3-phosphate: step 4/5. Catalyzes the reversible conversion of 2-phosphoglycerate (2-PG) into phosphoenolpyruvate (PEP). It is essential for the degradation of carbohydrates via glycolysis. In Chlorobaculum tepidum (strain ATCC 49652 / DSM 12025 / NBRC 103806 / TLS) (Chlorobium tepidum), this protein is Enolase 2.